The sequence spans 1104 residues: MIQEEKEQYSSKSLEAGVDELWRASDAYALTRKKRLGSKRFFFVDGPPYTTGRIHLGTAWNKIIKDSVLRYRSMNGYDLIDRPGWDMHGLPIEVKVESILGFKTKKDIEEFGVARFTEECKKFAIGNMHEMTSQFKKLGVWMNWDDPYMTLKNEYIEAAWWTIKQAHEKHLLERGLRNVNWCPRCETAIADSEVEYADRKDDSIYVKFPLKNEEGFLVIWTTTPWTIPANMAVAANKDFTYAMVYALPAAVLEEAAMQAGLDHTTLVEHHSDGRPKPMRYSDKVAKMKEAIGEEKVKELYEKHGEKLIIARDLVDGVLKMGRYADYQVLKTMTGEELKGTEYVHPLADLIPCQKETEHKVYLADFVVGENTGMVHIAPGHGFDDFELGLKEGIRAYCPVKANGHYDDSVGAYAGMEIREANPKIMEDLRQRNLLLGATTIEHRYGHCWRCKTPIIFLTTDQWFIAVSKMKEDMLAEVKRVNWYPDWAGSARFYDWVNGARDWCVSRQRYWGIPIPIWKCEKCGSLDVIGTKEELERKVGREVPDLHRPFVDEVRLECECGGSMRRVEDIFDVWFDSAVASWATLHFPGRKDLMDWWPADFIVEGHDQTRGWFYSQLGAGMVGFGKAPYNGVCMHGFTLDETGKKMSKSLGNVVAPEDVVEKLGADTLRLYVLSQNAPWEDLSFSWEECGNINRAINIFWNVYRFPLPYMVLDKFDPAKVTLESVKGSLRVEDRWILSKLQAVIKDVDTYMATYELHRATRSIISFILEDLSRWYVQLARERTWVEADDPDKLAAYRVLYDTLVTTVKLIAPFTPYIAERMYQNLVRNVSAEAPVSVHMCDWPVVDSSLLDEQLNRDMDIARKIVEASSNARQKAKRKLRWPVQKIVVAAENPDVVTAVKDLSGVIGEQTNSKEVVVLAPGEANTELGVEVVPNPKLIGPIFKAVAGKVTAALKEADGRAVKKAIEEEKKYIVEIPEGSFDILLDMVSFRDVIPESLAMADFPGGKVYVDVTLSKELEAEGYTRELIRRIQDMRKEMNLNVEDRIKVEVYVGDEKVLDLVKSMKDYAAGEVRADTLDLKTEKPAAGFVKDWDVEGIPMTIGLEKI.

The short motif at 48 to 58 is the 'HIGH' region element; the sequence is PYTTGRIHLGT. The 'KMSKS' region signature appears at 644 to 648; that stretch reads KMSKS. Position 647 (lysine 647) interacts with ATP.

The protein belongs to the class-I aminoacyl-tRNA synthetase family. IleS type 2 subfamily. In terms of assembly, monomer. The cofactor is Zn(2+).

The protein localises to the cytoplasm. The enzyme catalyses tRNA(Ile) + L-isoleucine + ATP = L-isoleucyl-tRNA(Ile) + AMP + diphosphate. In terms of biological role, catalyzes the attachment of isoleucine to tRNA(Ile). As IleRS can inadvertently accommodate and process structurally similar amino acids such as valine, to avoid such errors it has two additional distinct tRNA(Ile)-dependent editing activities. One activity is designated as 'pretransfer' editing and involves the hydrolysis of activated Val-AMP. The other activity is designated 'posttransfer' editing and involves deacylation of mischarged Val-tRNA(Ile). This Methanocella arvoryzae (strain DSM 22066 / NBRC 105507 / MRE50) protein is Isoleucine--tRNA ligase.